The following is a 250-amino-acid chain: 1-(5-phosphoribosyl)-5-[(5-phosphoribosylamino)methylideneamino] imidazole-4-carboxamide isomerase (250 aa).

Catalysis depends on Asp-8, which acts as the Proton acceptor. The Proton donor role is filled by Asp-131.

Belongs to the HisA/HisF family.

Its subcellular location is the cytoplasm. The enzyme catalyses 1-(5-phospho-beta-D-ribosyl)-5-[(5-phospho-beta-D-ribosylamino)methylideneamino]imidazole-4-carboxamide = 5-[(5-phospho-1-deoxy-D-ribulos-1-ylimino)methylamino]-1-(5-phospho-beta-D-ribosyl)imidazole-4-carboxamide. It functions in the pathway amino-acid biosynthesis; L-histidine biosynthesis; L-histidine from 5-phospho-alpha-D-ribose 1-diphosphate: step 4/9. In Paraburkholderia phytofirmans (strain DSM 17436 / LMG 22146 / PsJN) (Burkholderia phytofirmans), this protein is 1-(5-phosphoribosyl)-5-[(5-phosphoribosylamino)methylideneamino] imidazole-4-carboxamide isomerase.